The primary structure comprises 366 residues: Putative agmatine deiminase (366 aa).

The active-site Amidino-cysteine intermediate is C357.

The protein belongs to the agmatine deiminase family.

The enzyme catalyses agmatine + H2O = N-carbamoylputrescine + NH4(+). The protein is Putative agmatine deiminase of Lactococcus lactis subsp. lactis (strain IL1403) (Streptococcus lactis).